Here is a 285-residue protein sequence, read N- to C-terminus: Bifunctional protein FolD (285 aa).

NADP(+)-binding positions include 165 to 167 (GRS) and S190.

This sequence belongs to the tetrahydrofolate dehydrogenase/cyclohydrolase family. Homodimer.

The catalysed reaction is (6R)-5,10-methylene-5,6,7,8-tetrahydrofolate + NADP(+) = (6R)-5,10-methenyltetrahydrofolate + NADPH. It carries out the reaction (6R)-5,10-methenyltetrahydrofolate + H2O = (6R)-10-formyltetrahydrofolate + H(+). Its pathway is one-carbon metabolism; tetrahydrofolate interconversion. Catalyzes the oxidation of 5,10-methylenetetrahydrofolate to 5,10-methenyltetrahydrofolate and then the hydrolysis of 5,10-methenyltetrahydrofolate to 10-formyltetrahydrofolate. This is Bifunctional protein FolD from Staphylococcus saprophyticus subsp. saprophyticus (strain ATCC 15305 / DSM 20229 / NCIMB 8711 / NCTC 7292 / S-41).